The primary structure comprises 891 residues: von Willebrand factor A domain-containing protein 7 (891 aa).

The signal sequence occupies residues 1–28 (MLPTEVPQSHPGPSALLLLQLLLPPTSA). Residue Asn-55 is glycosylated (N-linked (GlcNAc...) asparagine). The interval 237–272 (PKPPGKCSHGGHFDRSSSQPPRGGINKDSTSPGFSP) is disordered. The VWFA domain maps to 313 to 506 (ASSLSFVLDT…SMAALVTLPL (194 aa)).

In terms of tissue distribution, expressed at low level in different cell lines.

Its subcellular location is the secreted. This Homo sapiens (Human) protein is von Willebrand factor A domain-containing protein 7 (VWA7).